Consider the following 199-residue polypeptide: V-type ATP synthase subunit E (199 aa).

Belongs to the V-ATPase E subunit family.

Produces ATP from ADP in the presence of a proton gradient across the membrane. This Borreliella burgdorferi (strain ATCC 35210 / DSM 4680 / CIP 102532 / B31) (Borrelia burgdorferi) protein is V-type ATP synthase subunit E (atpE).